A 427-amino-acid polypeptide reads, in one-letter code: Adenylosuccinate synthetase (427 aa).

GTP contacts are provided by residues 12–18 (GDEGKGK) and 40–42 (GHT). The Proton acceptor role is filled by Asp13. Mg(2+)-binding residues include Asp13 and Gly40. IMP-binding positions include 13 to 16 (DEGK), 38 to 41 (NAGH), Thr128, Arg142, Gln223, Thr238, and Arg302. His41 (proton donor) is an active-site residue. 298-304 (VTTGRAR) contributes to the substrate binding site. Residues Arg304, 330–332 (KLD), and 412–414 (GVG) contribute to the GTP site.

It belongs to the adenylosuccinate synthetase family. As to quaternary structure, homodimer. The cofactor is Mg(2+).

Its subcellular location is the cytoplasm. It carries out the reaction IMP + L-aspartate + GTP = N(6)-(1,2-dicarboxyethyl)-AMP + GDP + phosphate + 2 H(+). It participates in purine metabolism; AMP biosynthesis via de novo pathway; AMP from IMP: step 1/2. Its function is as follows. Plays an important role in the de novo pathway of purine nucleotide biosynthesis. Catalyzes the first committed step in the biosynthesis of AMP from IMP. The polypeptide is Adenylosuccinate synthetase (Parafrankia sp. (strain EAN1pec)).